Reading from the N-terminus, the 254-residue chain is Trans-aconitate 2-methyltransferase (254 aa).

The protein belongs to the methyltransferase superfamily. Tam family.

The protein resides in the cytoplasm. The enzyme catalyses trans-aconitate + S-adenosyl-L-methionine = (E)-3-(methoxycarbonyl)pent-2-enedioate + S-adenosyl-L-homocysteine. In terms of biological role, catalyzes the S-adenosylmethionine monomethyl esterification of trans-aconitate. The protein is Trans-aconitate 2-methyltransferase of Rhodococcus jostii (strain RHA1).